We begin with the raw amino-acid sequence, 626 residues long: UvrABC system protein C (626 aa).

The region spanning 26 to 105 is the GIY-YIG domain; that stretch reads PEPGVYFMRD…IKQHQPHFNV (80 aa). Positions 215–250 constitute a UVR domain; that stretch reads SELINTLSLQMEQAAEDLNFEQAARLRDQIKGLQGL.

The protein belongs to the UvrC family. In terms of assembly, interacts with UvrB in an incision complex.

It is found in the cytoplasm. Its function is as follows. The UvrABC repair system catalyzes the recognition and processing of DNA lesions. UvrC both incises the 5' and 3' sides of the lesion. The N-terminal half is responsible for the 3' incision and the C-terminal half is responsible for the 5' incision. The protein is UvrABC system protein C of Acaryochloris marina (strain MBIC 11017).